Reading from the N-terminus, the 301-residue chain is tRNA dimethylallyltransferase (301 aa).

An ATP-binding site is contributed by 8-15; the sequence is GPTAVGKT. 10–15 is a substrate binding site; it reads TAVGKT. The segment at 33–36 is interaction with substrate tRNA; that stretch reads DSRQ.

It belongs to the IPP transferase family. As to quaternary structure, monomer. The cofactor is Mg(2+).

The catalysed reaction is adenosine(37) in tRNA + dimethylallyl diphosphate = N(6)-dimethylallyladenosine(37) in tRNA + diphosphate. Its function is as follows. Catalyzes the transfer of a dimethylallyl group onto the adenine at position 37 in tRNAs that read codons beginning with uridine, leading to the formation of N6-(dimethylallyl)adenosine (i(6)A). This chain is tRNA dimethylallyltransferase, found in Thermosipho melanesiensis (strain DSM 12029 / CIP 104789 / BI429).